Reading from the N-terminus, the 573-residue chain is Arylsulfatase I (573 aa).

Positions 1 to 23 (MHALTGLSLVSLLSFGYLSWDWA) are cleaved as a signal peptide. The Ca(2+) site is built by aspartate 56, aspartate 57, and cysteine 94. Cysteine 94 (nucleophile) is an active-site residue. Cysteine 94 carries the 3-oxoalanine (Cys) modification. Residue lysine 148 coordinates substrate. Residue histidine 150 is part of the active site. Position 240 (histidine 240) interacts with substrate. 2 N-linked (GlcNAc...) asparagine glycosylation sites follow: asparagine 277 and asparagine 289. The Ca(2+) site is built by aspartate 298 and asparagine 299. Lysine 316 provides a ligand contact to substrate. N-linked (GlcNAc...) asparagine glycans are attached at residues asparagine 467 and asparagine 497. Residues 516–550 (FNGGAWGPWASDEEEEEEEEEAGRARSFSRGRRKK) form a disordered region. Acidic residues predominate over residues 526–536 (SDEEEEEEEEE).

This sequence belongs to the sulfatase family. Requires Ca(2+) as cofactor. In terms of processing, the oxidation of Cys-94 residue to 3-oxoalanine (also known as C(alpha)-formylglycine) by SUMF1/Sulfatase-modifying factor 1, seems critical for catalytic activity.

It is found in the secreted. It localises to the endoplasmic reticulum. In terms of biological role, displays arylsulfatase activity at neutral pH, when co-expressed with SUMF1; arylsulfatase activity is measured in the secretion medium of retinal cell line, but no activity is recorded when measured in cell extracts. This chain is Arylsulfatase I (ARSI), found in Canis lupus familiaris (Dog).